A 399-amino-acid chain; its full sequence is Flavohemoprotein (399 aa).

The Globin domain maps to 1–138 (MLDNKTIEII…IADAFIGIEK (138 aa)). His-85 serves as a coordination point for heme b. Active-site charge relay system residues include Tyr-95 and Glu-137. The reductase stretch occupies residues 149–399 (GGWKEYKPFV…GPQLSLAQSV (251 aa)). Residues 152–255 (KEYKPFVIAK…SAPAGDFVLD (104 aa)) form the FAD-binding FR-type domain. FAD contacts are provided by residues Tyr-190 and 206-209 (RQYS). 268 to 273 (GVGITP) contacts NADP(+). Position 388–391 (388–391 (LFGP)) interacts with FAD.

The protein belongs to the globin family. Two-domain flavohemoproteins subfamily. It in the C-terminal section; belongs to the flavoprotein pyridine nucleotide cytochrome reductase family. Heme b is required as a cofactor. It depends on FAD as a cofactor.

The catalysed reaction is 2 nitric oxide + NADPH + 2 O2 = 2 nitrate + NADP(+) + H(+). It carries out the reaction 2 nitric oxide + NADH + 2 O2 = 2 nitrate + NAD(+) + H(+). Is involved in NO detoxification in an aerobic process, termed nitric oxide dioxygenase (NOD) reaction that utilizes O(2) and NAD(P)H to convert NO to nitrate, which protects the bacterium from various noxious nitrogen compounds. Therefore, plays a central role in the inducible response to nitrosative stress. In Bacillus subtilis (strain 168), this protein is Flavohemoprotein (hmp).